Consider the following 120-residue polypeptide: Large ribosomal subunit protein uL24 (120 aa).

This sequence belongs to the universal ribosomal protein uL24 family. In terms of assembly, part of the 50S ribosomal subunit.

Its function is as follows. One of two assembly initiator proteins, it binds directly to the 5'-end of the 23S rRNA, where it nucleates assembly of the 50S subunit. In terms of biological role, located at the polypeptide exit tunnel on the outside of the subunit. This chain is Large ribosomal subunit protein uL24, found in Methanocaldococcus jannaschii (strain ATCC 43067 / DSM 2661 / JAL-1 / JCM 10045 / NBRC 100440) (Methanococcus jannaschii).